The chain runs to 628 residues: MLEKYEILKDYKGPFDIKNYDYETLQKLAQEVRDYIINVTSKNGGHVGPSLGVVELTIALLRVFNPPEDVIVWDIGHQGYPWKILTDRKEQFPTLRQYKGISGFLRREESIYDAFGAGHSSTSISAALGFRIGKDLKGEKEDYVIAVIGDGALTAGMAYEALNNAGHIRPDRFIVILNDNEMSISPNVGAISTYLNRIISGHFVQETRQKIKNFLQHFGETPLRIMKLTEEFLKGLISPGVIFEELGFNYIGPIDGHDIKALEDTLNNVKDIKGPVLLHVYTKKGKGYKPAEENPVKWHGVAPYKVESGEIIKKSSPPTWTSVFGKALVELAERDEKIVAITPAMREGSGLVEFAKRFPDRFFDVGIAEQHACTFAAGLAAEGLRPVAAYYSTFLQRAYDQVIHDVALQNLPVTFAIDRAGLVGDDGPTHHGVFDLSYLRCVPNMVVCAPKDEQELRDLLYTGIYSGKPFALRYPRGAAYGVPTEGFKKIEIGTWEELLEGEDCVILAVGYPVYQALRAAEKLYKEGIRVGVVNARFVKPMDEKMLRDLANRYDTFITVEDNTVVGGFGSGVLEFFAREGIMKRVINLGVPDRFIEHGKQDILRNLVGIDAEGIEKAVRDALKGGRLI.

Residues His77 and 118–120 (GHS) each bind thiamine diphosphate. Asp150 contributes to the Mg(2+) binding site. Thiamine diphosphate-binding positions include 151 to 152 (GA), Asn180, Tyr288, and Glu369. A Mg(2+)-binding site is contributed by Asn180.

Belongs to the transketolase family. DXPS subfamily. As to quaternary structure, homodimer. Mg(2+) serves as cofactor. The cofactor is thiamine diphosphate.

The enzyme catalyses D-glyceraldehyde 3-phosphate + pyruvate + H(+) = 1-deoxy-D-xylulose 5-phosphate + CO2. The protein operates within metabolic intermediate biosynthesis; 1-deoxy-D-xylulose 5-phosphate biosynthesis; 1-deoxy-D-xylulose 5-phosphate from D-glyceraldehyde 3-phosphate and pyruvate: step 1/1. Functionally, catalyzes the acyloin condensation reaction between C atoms 2 and 3 of pyruvate and glyceraldehyde 3-phosphate to yield 1-deoxy-D-xylulose-5-phosphate (DXP). In Aquifex aeolicus (strain VF5), this protein is 1-deoxy-D-xylulose-5-phosphate synthase.